Here is a 43-residue protein sequence, read N- to C-terminus: Potassium channel toxin gamma-KTx 4.9 (43 aa).

4 disulfides stabilise this stretch: C5–C23, C11–C34, C20–C39, and C24–C41.

It belongs to the ergtoxin family. Gamma-KTx 4 subfamily. In terms of tissue distribution, expressed by the venom gland.

The protein resides in the secreted. Functionally, reversibly blocks Kv11/ERG potassium channels. The protein is Potassium channel toxin gamma-KTx 4.9 of Centruroides sculpturatus (Arizona bark scorpion).